The chain runs to 464 residues: PH domain-containing rcdII (464 aa).

A coiled-coil region spans residues 8-210; sequence KSSKEIIEDL…NTKLMSNLEI (203 aa). 2 disordered regions span residues 215-290 and 317-347; these read NFNN…NSSG and CNNN…SNSN. Low complexity-rich tracts occupy residues 234–288, 317–328, and 338–347; these read STTT…SSNS, CNNNNNNNNGNS, and RSRSSSSNSN. Residues 353 to 461 form the PH domain; sequence KIVKEGWLKR…WKDTISSLMP (109 aa).

This Dictyostelium discoideum (Social amoeba) protein is PH domain-containing rcdII (rcdII).